A 179-amino-acid chain; its full sequence is UPF0227 protein PM0825 (179 aa).

It belongs to the UPF0227 family.

This Pasteurella multocida (strain Pm70) protein is UPF0227 protein PM0825.